A 186-amino-acid polypeptide reads, in one-letter code: MSKTDWNASGLSRPSPSAHWPSRKLWQHGQKYQTTQDRSEPPAGKRRQAVRVSANHASQQLDQLKAVHLASAVRDLERAMTTLKLWESPQEISRHQALGYSVIMFMITAVKRLRESKMLTLSWFNQALMVIAPSQEETMNLKTAMWILANLIPRDMLSLTGDLLPSLWGSGLLMLKLQKEGRSTSS.

Residues 1-15 are compositionally biased toward polar residues; that stretch reads MSKTDWNASGLSRPS. Residues 1–44 are disordered; that stretch reads MSKTDWNASGLSRPSPSAHWPSRKLWQHGQKYQTTQDRSEPPAG.

Belongs to the morbillivirus protein C family. Interacts with the phosphoprotein (via C-terminus); this interaction allows C to associate with the ribonucleocapsid.

The protein resides in the host nucleus. The protein localises to the host cytoplasmic vesicle. Its function is as follows. Ribonucleocapsid-associated protein that interacts with the phosphoprotein (P), thereby increasing replication accuracy and processivity of the polymerase complex. In Homo sapiens (Human), this protein is Protein C (P/V/C).